Consider the following 54-residue polypeptide: MKLLTHTCHYCSFSFFTRKFDVFGAITKKDTPVVFCPACGNQSLSVSHIEEEII.

Belongs to the phi29likevirus gp16.6 family.

In Bacillus subtilis (Bacteriophage phi-15), this protein is Gene product 16.6 (16.6).